The chain runs to 122 residues: Large ribosomal subunit protein uL14 (122 aa).

The protein belongs to the universal ribosomal protein uL14 family. In terms of assembly, part of the 50S ribosomal subunit. Forms a cluster with proteins L3 and L19. In the 70S ribosome, L14 and L19 interact and together make contacts with the 16S rRNA in bridges B5 and B8.

Its function is as follows. Binds to 23S rRNA. Forms part of two intersubunit bridges in the 70S ribosome. In Methylobacillus flagellatus (strain ATCC 51484 / DSM 6875 / VKM B-1610 / KT), this protein is Large ribosomal subunit protein uL14.